A 316-amino-acid polypeptide reads, in one-letter code: MFKFDRKQEVYEVGGVKFGGQPGEYPTVLVSTMFYARHKIVTDEDKGIFDRAAAETLWNTQVSLSDATGNPYVNQIVGETPESIRKYIDWFIEIDDKTPFLIDSSAGEVRAAAAQYCTEIGVANRAIHNSINASIEQSEIDILTESDVEAAIVLAFNATDPTVKGKLDILEVGGSGQTKGMLQVAEECGIKIPLIDVAAMPLGAGSGATIRSIPTIKGKLGLPVGGGYHNMASAWDWLRKFKKTQPDPKAIYMPADIGTNLVAQIAGSDFLLYGPIENVEKVFPAVAMVDIMLGETAKELGVEIADSENHPVTRLT.

This sequence belongs to the MtrH family. As to quaternary structure, the complex is composed of 8 subunits; MtrA, MtrB, MtrC, MtrD, MtrE, MtrF, MtrG and MtrH.

The catalysed reaction is 5-methyl-5,6,7,8-tetrahydromethanopterin + coenzyme M + 2 Na(+)(in) = 5,6,7,8-tetrahydromethanopterin + methyl-coenzyme M + 2 Na(+)(out). It functions in the pathway one-carbon metabolism; methanogenesis from CO(2); methyl-coenzyme M from 5,10-methylene-5,6,7,8-tetrahydromethanopterin: step 2/2. Part of a complex that catalyzes the formation of methyl-coenzyme M and tetrahydromethanopterin from coenzyme M and methyl-tetrahydromethanopterin. This is an energy-conserving, sodium-ion translocating step. MtrH catalyzes the transfer of the methyl group from methyl-tetrahydromethanopterin to the corrinoid prosthetic group of MtrA. This chain is Tetrahydromethanopterin S-methyltransferase subunit H, found in Methanosarcina acetivorans (strain ATCC 35395 / DSM 2834 / JCM 12185 / C2A).